The following is a 257-amino-acid chain: Ribosomal RNA small subunit methyltransferase J (257 aa).

S-adenosyl-L-methionine contacts are provided by residues 109–110, 125–126, and D179; these read RD and ER.

This sequence belongs to the methyltransferase superfamily. RsmJ family.

The protein localises to the cytoplasm. The enzyme catalyses guanosine(1516) in 16S rRNA + S-adenosyl-L-methionine = N(2)-methylguanosine(1516) in 16S rRNA + S-adenosyl-L-homocysteine + H(+). Its function is as follows. Specifically methylates the guanosine in position 1516 of 16S rRNA. This chain is Ribosomal RNA small subunit methyltransferase J, found in Actinobacillus succinogenes (strain ATCC 55618 / DSM 22257 / CCUG 43843 / 130Z).